We begin with the raw amino-acid sequence, 131 residues long: uncharacterized protein (131 aa).

2 consecutive transmembrane segments (helical) span residues 61–81 (LLLL…YLPI) and 102–122 (VCSI…ALRY).

It localises to the membrane. This is an uncharacterized protein from Saccharomyces cerevisiae (strain ATCC 204508 / S288c) (Baker's yeast).